We begin with the raw amino-acid sequence, 127 residues long: Glycine cleavage system H protein (127 aa).

In terms of domain architecture, Lipoyl-binding spans 24-105 (TALVGITDFA…YGSGWMVKMK (82 aa)). At Lys-65 the chain carries N6-lipoyllysine.

Belongs to the GcvH family. As to quaternary structure, the glycine cleavage system is composed of four proteins: P, T, L and H. The cofactor is (R)-lipoate.

Functionally, the glycine cleavage system catalyzes the degradation of glycine. The H protein shuttles the methylamine group of glycine from the P protein to the T protein. The sequence is that of Glycine cleavage system H protein from Chlorobium luteolum (strain DSM 273 / BCRC 81028 / 2530) (Pelodictyon luteolum).